We begin with the raw amino-acid sequence, 275 residues long: MASRVNIVQVQILDNPAMFVDKFKLEITFEVFEHLPHDLEWELVYVGSGTSRDFDQVLDSALVGPIPEGRHKFVFDADHPDISKIPVDDIVGVSVLLLRCKYNDQEFINMGWFVANEYTEEELKENPPSQPLIEKLSRKVETEDLRITTFPIRWTDEDPVAEPVEDEANRVFAEDDLMPLNDDGQEDDDEEEEDDDEMEANAEEVDLNESFNERLANALDGAEQKGADEKMEDDGANEDVDMADDEPGVQINTDTKVPESMAEPLSDKTNNEMVQ.

Composition is skewed to acidic residues over residues 157–166, 183–207, and 230–247; these read EDPVAEPVED, DGQE…EVDL, and KMED…DDEP. The tract at residues 157–275 is disordered; sequence EDPVAEPVED…SDKTNNEMVQ (119 aa). The segment covering 265 to 275 has biased composition (basic and acidic residues); that stretch reads LSDKTNNEMVQ.

Belongs to the ASF1 family. Interacts with histone H3 and histone H4.

The protein resides in the nucleus. Histone chaperone that facilitates histone deposition and histone exchange and removal during nucleosome assembly and disassembly. This Caenorhabditis elegans protein is Probable histone chaperone asf-1.